We begin with the raw amino-acid sequence, 706 residues long: Envelope glycoprotein H (706 aa).

The signal sequence occupies residues M1–A18. Topologically, residues S19–L682 are virion surface. Residue N60 is glycosylated (N-linked (GlcNAc...) asparagine; by host). Residues D165–V229 are interaction with gL. A disulfide bridge connects residues C278 and C335. N-linked (GlcNAc...) asparagine; by host glycosylation occurs at N435. 2 disulfide bridges follow: C454–C478 and C534–C587. N-linked (GlcNAc...) asparagine; by host glycosylation is found at N549 and N604. C612 and C615 are disulfide-bonded. N-linked (GlcNAc...) asparagine; by host glycosylation is present at N664. The chain crosses the membrane as a helical span at residues A683–M703. Residues F704–L706 lie on the Intravirion side of the membrane.

The protein belongs to the herpesviridae glycoprotein H family. In terms of assembly, interacts with glycoprotein L (gL); this interaction is necessary for the correct processing and cell surface expression of gH. The heterodimer gH/gL seems to interact with gB trimers during fusion. The heterodimer gH/gL interacts with host EPHA2 to facilitate virus internalization and fusion. Interacts with glycoprotein 42/BZLF2. N-glycosylated, O-glycosylated, and sialylated.

It localises to the virion membrane. It is found in the host cell membrane. The protein resides in the host endosome membrane. Functionally, the heterodimer glycoprotein H-glycoprotein L is required for the fusion of viral and plasma membranes leading to virus entry into the host cell. Following initial binding to host receptor, membrane fusion is mediated by the fusion machinery composed of gB and the heterodimer gH/gL. May also be involved in the fusion between the virion envelope and the outer nuclear membrane during virion morphogenesis. The heterodimer gH/gL targets also host EPHA2 to promote viral entry. The sequence is that of Envelope glycoprotein H from Homo sapiens (Human).